The sequence spans 190 residues: GTP cyclohydrolase 1 (190 aa).

Residues Cys75, His78, and Cys146 each contribute to the Zn(2+) site.

This sequence belongs to the GTP cyclohydrolase I family. In terms of assembly, homomer.

It catalyses the reaction GTP + H2O = 7,8-dihydroneopterin 3'-triphosphate + formate + H(+). The protein operates within cofactor biosynthesis; 7,8-dihydroneopterin triphosphate biosynthesis; 7,8-dihydroneopterin triphosphate from GTP: step 1/1. The protein is GTP cyclohydrolase 1 of Campylobacter jejuni subsp. jejuni serotype O:6 (strain 81116 / NCTC 11828).